Here is a 470-residue protein sequence, read N- to C-terminus: ATP-dependent protease ATPase subunit HslU (470 aa).

Residues Val-22 and 64-69 contribute to the ATP site; that span reads GVGKTE. The interval 145–187 is disordered; it reads KKANNNTNSNNPLESLFGGSIPNFGQNNDDEEETPTDEVKTKR. The ATP site is built by Asp-283, Glu-348, and Arg-420.

This sequence belongs to the ClpX chaperone family. HslU subfamily. A double ring-shaped homohexamer of HslV is capped on each side by a ring-shaped HslU homohexamer. The assembly of the HslU/HslV complex is dependent on binding of ATP.

It localises to the cytoplasm. Its function is as follows. ATPase subunit of a proteasome-like degradation complex; this subunit has chaperone activity. The binding of ATP and its subsequent hydrolysis by HslU are essential for unfolding of protein substrates subsequently hydrolyzed by HslV. HslU recognizes the N-terminal part of its protein substrates and unfolds these before they are guided to HslV for hydrolysis. The sequence is that of ATP-dependent protease ATPase subunit HslU from Staphylococcus saprophyticus subsp. saprophyticus (strain ATCC 15305 / DSM 20229 / NCIMB 8711 / NCTC 7292 / S-41).